We begin with the raw amino-acid sequence, 302 residues long: L-aminoadipate-semialdehyde dehydrogenase-phosphopantetheinyl transferase (302 aa).

CoA is bound by residues Arg44, 83-88, and 105-108; these read RTGKGK and NVSH. The Mg(2+) site is built by Asp126 and Glu178. 178–182 provides a ligand contact to CoA; the sequence is ESFIK.

The protein belongs to the P-Pant transferase superfamily. AcpS family. Monomer. Mg(2+) is required as a cofactor.

The protein resides in the cytoplasm. The protein localises to the cytosol. The catalysed reaction is apo-[ACP] + CoA = holo-[ACP] + adenosine 3',5'-bisphosphate + H(+). It catalyses the reaction apo-[ACP] + acetyl-CoA = acetyl-[ACP] + adenosine 3',5'-bisphosphate + H(+). Catalyzes the post-translational modification of target proteins by phosphopantetheine. Can transfer the 4'-phosphopantetheine moiety from coenzyme A, regardless of whether the CoA is presented in the free thiol form or as an acetyl thioester, to a serine residue of a broad range of acceptors. The protein is L-aminoadipate-semialdehyde dehydrogenase-phosphopantetheinyl transferase (aasdhppt) of Xenopus laevis (African clawed frog).